The following is a 236-amino-acid chain: Eukaryotic translation initiation factor 3 subunit K (236 aa).

The PCI domain occupies 48-218 (CDCNANRTLL…EAKKAEIRED (171 aa)).

The protein belongs to the eIF-3 subunit K family.

Its subcellular location is the cytoplasm. Component of the eukaryotic translation initiation factor 3 (eIF-3) complex, which is involved in protein synthesis of a specialized repertoire of mRNAs and, together with other initiation factors, stimulates binding of mRNA and methionyl-tRNAi to the 40S ribosome. The eIF-3 complex specifically targets and initiates translation of a subset of mRNAs involved in cell proliferation. The chain is Eukaryotic translation initiation factor 3 subunit K from Pyricularia oryzae (strain Y34) (Rice blast fungus).